The sequence spans 285 residues: NAD kinase (285 aa).

The active-site Proton acceptor is Asp64. Residues 64–65 (DG), 140–141 (ND), Arg151, Arg168, Asp170, and 181–186 (TGYNLS) contribute to the NAD(+) site.

The protein belongs to the NAD kinase family. A divalent metal cation serves as cofactor.

It localises to the cytoplasm. The enzyme catalyses NAD(+) + ATP = ADP + NADP(+) + H(+). In terms of biological role, involved in the regulation of the intracellular balance of NAD and NADP, and is a key enzyme in the biosynthesis of NADP. Catalyzes specifically the phosphorylation on 2'-hydroxyl of the adenosine moiety of NAD to yield NADP. The protein is NAD kinase of Lachnoclostridium phytofermentans (strain ATCC 700394 / DSM 18823 / ISDg) (Clostridium phytofermentans).